A 504-amino-acid polypeptide reads, in one-letter code: Arabinose import ATP-binding protein AraG (504 aa).

2 ABC transporter domains span residues 8-243 (LSFR…MVGR) and 256-499 (YGEE…MPKV). 40 to 47 (GENGAGKS) contributes to the ATP binding site.

It belongs to the ABC transporter superfamily. Arabinose importer (TC 3.A.1.2.2) family. The complex is composed of two ATP-binding proteins (AraG), two transmembrane proteins (AraH) and a solute-binding protein (AraF).

The protein resides in the cell inner membrane. The catalysed reaction is L-arabinose(out) + ATP + H2O = L-arabinose(in) + ADP + phosphate + H(+). In terms of biological role, part of the ABC transporter complex AraFGH involved in arabinose import. Responsible for energy coupling to the transport system. In Shigella flexneri, this protein is Arabinose import ATP-binding protein AraG.